The sequence spans 567 residues: Proline--tRNA ligase (567 aa).

This sequence belongs to the class-II aminoacyl-tRNA synthetase family. ProS type 1 subfamily. As to quaternary structure, homodimer.

It is found in the cytoplasm. The enzyme catalyses tRNA(Pro) + L-proline + ATP = L-prolyl-tRNA(Pro) + AMP + diphosphate. Its function is as follows. Catalyzes the attachment of proline to tRNA(Pro) in a two-step reaction: proline is first activated by ATP to form Pro-AMP and then transferred to the acceptor end of tRNA(Pro). As ProRS can inadvertently accommodate and process non-cognate amino acids such as alanine and cysteine, to avoid such errors it has two additional distinct editing activities against alanine. One activity is designated as 'pretransfer' editing and involves the tRNA(Pro)-independent hydrolysis of activated Ala-AMP. The other activity is designated 'posttransfer' editing and involves deacylation of mischarged Ala-tRNA(Pro). The misacylated Cys-tRNA(Pro) is not edited by ProRS. This chain is Proline--tRNA ligase, found in Campylobacter fetus subsp. fetus (strain 82-40).